A 342-amino-acid polypeptide reads, in one-letter code: tRNA-specific 2-thiouridylase MnmA (342 aa).

Residues 6–13 (LLSGGVDS) and Leu32 each bind ATP. Cys92 functions as the Nucleophile in the catalytic mechanism. A disulfide bridge connects residues Cys92 and Cys191. Gly116 is an ATP binding site. The segment at 138 to 140 (KDQ) is interaction with tRNA. Cys191 (cysteine persulfide intermediate) is an active-site residue. The interval 293 to 294 (RY) is interaction with tRNA.

Belongs to the MnmA/TRMU family.

Its subcellular location is the cytoplasm. The catalysed reaction is S-sulfanyl-L-cysteinyl-[protein] + uridine(34) in tRNA + AH2 + ATP = 2-thiouridine(34) in tRNA + L-cysteinyl-[protein] + A + AMP + diphosphate + H(+). Its function is as follows. Catalyzes the 2-thiolation of uridine at the wobble position (U34) of tRNA, leading to the formation of s(2)U34. This is tRNA-specific 2-thiouridylase MnmA from Helicobacter pylori (strain HPAG1).